A 262-amino-acid chain; its full sequence is MAVISMKQLLEAGVHFGHQTRRWNPKMKKYIFTERNGIYIIDLQKTVKKVEEAYNFIKQVSEDGGRVLFVGTKKQAQESVKAEAERAGQFYVNQRWLGGILTNYKTISKRIKRISEIEKMEEDGLFDVLPKKEVVELKKEYDRLIKFLGGIRDMKSMPQALFVVDPRKERNAIAEARKLNIPIVGIVDTNCDPDEIDYVIPANDDAIRAVKLLTGKMADAVLEGQQGVSNDEVAAEQNINLDEKEESQEAESTEENTTVESN.

Residues 240 to 262 (NLDEKEESQEAESTEENTTVESN) form a disordered region. A compositionally biased stretch (acidic residues) spans 243–254 (EKEESQEAESTE).

The protein belongs to the universal ribosomal protein uS2 family.

This chain is Small ribosomal subunit protein uS2, found in Staphylococcus haemolyticus (strain JCSC1435).